Here is a 243-residue protein sequence, read N- to C-terminus: MRRPVIAGNWKMHMTCAQAREFMAAFLPLVADMPNDRDLVLAPPFTALSSMADLCKDSPIALSSQNVHWEGSGAFTGEISPSMLKEHGVTYTIVGHSEPRKYFSESDEQINHRARSSQANGLIPIVCVGETDEQRERGEAERVIRRQIEQGLEGLDADLLVVAYEPIWAIGTGKTCEAAEANRICGLIRSWVGSPDLVIQYGGSVKGGNIDELMGMSDIDGVLVGGASLQPDGFARIANYNVA.

Residue 9 to 11 (NWK) participates in substrate binding. The active-site Electrophile is the histidine 96. Glutamate 165 functions as the Proton acceptor in the catalytic mechanism. Substrate-binding positions include glycine 171, serine 204, and 225–226 (GG).

The protein belongs to the triosephosphate isomerase family. In terms of assembly, homodimer.

It localises to the cytoplasm. The enzyme catalyses D-glyceraldehyde 3-phosphate = dihydroxyacetone phosphate. It functions in the pathway carbohydrate biosynthesis; gluconeogenesis. Its pathway is carbohydrate degradation; glycolysis; D-glyceraldehyde 3-phosphate from glycerone phosphate: step 1/1. Functionally, involved in the gluconeogenesis. Catalyzes stereospecifically the conversion of dihydroxyacetone phosphate (DHAP) to D-glyceraldehyde-3-phosphate (G3P). This chain is Triosephosphate isomerase, found in Synechococcus sp. (strain CC9902).